The chain runs to 376 residues: Chaperone protein DnaJ (376 aa).

The J domain occupies 5-70; it reads DYYEVLGVAK…QKRAAYDQYG (66 aa). The CR-type zinc-finger motif lies at 136-214; it reads GYDTQIRVPS…CHGSGKVKET (79 aa). Residues cysteine 149, cysteine 152, cysteine 166, cysteine 169, cysteine 188, cysteine 191, cysteine 202, and cysteine 205 each contribute to the Zn(2+) site. 4 CXXCXGXG motif repeats span residues 149 to 156, 166 to 173, 188 to 195, and 202 to 209; these read CGVCHGSG, CPTCHGQG, CPKCHGTG, and CVHCHGSG.

It belongs to the DnaJ family. In terms of assembly, homodimer. The cofactor is Zn(2+).

The protein localises to the cytoplasm. Functionally, participates actively in the response to hyperosmotic and heat shock by preventing the aggregation of stress-denatured proteins and by disaggregating proteins, also in an autonomous, DnaK-independent fashion. Unfolded proteins bind initially to DnaJ; upon interaction with the DnaJ-bound protein, DnaK hydrolyzes its bound ATP, resulting in the formation of a stable complex. GrpE releases ADP from DnaK; ATP binding to DnaK triggers the release of the substrate protein, thus completing the reaction cycle. Several rounds of ATP-dependent interactions between DnaJ, DnaK and GrpE are required for fully efficient folding. Also involved, together with DnaK and GrpE, in the DNA replication of plasmids through activation of initiation proteins. This chain is Chaperone protein DnaJ, found in Burkholderia pseudomallei (strain 1710b).